The primary structure comprises 219 residues: Charged multivesicular body protein 5 (219 aa).

The span at 1–10 (MNRFFGKAKP) shows a compositional bias: basic residues. Residues 1-21 (MNRFFGKAKPKAPPPSLTDCI) are disordered. Residues 26 to 179 (SRAESIDKKI…LGDELLADED (154 aa)) adopt a coiled-coil conformation. Phosphoserine is present on S86. The disordered stretch occupies residues 188-219 (SAPAIPEGVPTDTKNKDGVLVDEFGLPQIPAS).

This sequence belongs to the SNF7 family. Probable peripherally associated component of the endosomal sorting required for transport complex III (ESCRT-III). ESCRT-III components are thought to multimerize to form a flat lattice on the perimeter membrane of the endosome. Several assembly forms of ESCRT-III may exist that interact and act sequentially. Interacts with VTA1. Interacts with CHMP2A. Interacts with VTA1; the interaction involves soluble CHMP5. Interacts with NOD2. Interacts with BROX. In terms of processing, ISGylated. Isgylation inhibits its interaction with VTA1.

The protein resides in the cytoplasm. It localises to the cytosol. Its subcellular location is the endosome membrane. It is found in the midbody. Its function is as follows. Probable peripherally associated component of the endosomal sorting required for transport complex III (ESCRT-III) which is involved in multivesicular bodies (MVBs) formation and sorting of endosomal cargo proteins into MVBs. MVBs contain intraluminal vesicles (ILVs) that are generated by invagination and scission from the limiting membrane of the endosome and mostly are delivered to lysosomes enabling degradation of membrane proteins, such as stimulated growth factor receptors, lysosomal enzymes and lipids. The MVB pathway appears to require the sequential function of ESCRT-O, -I,-II and -III complexes. ESCRT-III proteins mostly dissociate from the invaginating membrane before the ILV is released. The ESCRT machinery also functions in topologically equivalent membrane fission events, such as the terminal stages of cytokinesis. ESCRT-III proteins are believed to mediate the necessary vesicle extrusion and/or membrane fission activities, possibly in conjunction with the AAA ATPase VPS4. This chain is Charged multivesicular body protein 5 (Chmp5), found in Mus musculus (Mouse).